The following is a 1400-amino-acid chain: DNA-directed RNA polymerase subunit beta' (1400 aa).

Zn(2+)-binding residues include Cys71, Cys73, Cys86, and Cys89. Mg(2+)-binding residues include Asp462, Asp464, and Asp466. Residues Cys810, Cys884, Cys891, and Cys894 each coordinate Zn(2+). The tract at residues 1378-1400 (EKQATIVPPAAPEAEPLALPPAE) is disordered.

The protein belongs to the RNA polymerase beta' chain family. As to quaternary structure, the RNAP catalytic core consists of 2 alpha, 1 beta, 1 beta' and 1 omega subunit. When a sigma factor is associated with the core the holoenzyme is formed, which can initiate transcription. Mg(2+) is required as a cofactor. Requires Zn(2+) as cofactor.

It carries out the reaction RNA(n) + a ribonucleoside 5'-triphosphate = RNA(n+1) + diphosphate. DNA-dependent RNA polymerase catalyzes the transcription of DNA into RNA using the four ribonucleoside triphosphates as substrates. This Rhodopseudomonas palustris (strain BisB5) protein is DNA-directed RNA polymerase subunit beta'.